A 435-amino-acid chain; its full sequence is U-box domain-containing protein 36 (435 aa).

The stretch at 227-345 (EAEASKRKAR…LKGKREEEEA (119 aa)) forms a coiled coil. In terms of domain architecture, U-box spans 352–426 (EPPQYFICPI…QEWLQLRELL (75 aa)).

It catalyses the reaction S-ubiquitinyl-[E2 ubiquitin-conjugating enzyme]-L-cysteine + [acceptor protein]-L-lysine = [E2 ubiquitin-conjugating enzyme]-L-cysteine + N(6)-ubiquitinyl-[acceptor protein]-L-lysine.. Its pathway is protein modification; protein ubiquitination. Functions as an E3 ubiquitin ligase. This chain is U-box domain-containing protein 36 (PUB36), found in Arabidopsis thaliana (Mouse-ear cress).